A 183-amino-acid chain; its full sequence is ATP synthase subunit b 2 (183 aa).

Residues 27–47 traverse the membrane as a helical segment; sequence PSFYAFLALLIFFGLLLHMGV.

This sequence belongs to the ATPase B chain family. In terms of assembly, F-type ATPases have 2 components, F(1) - the catalytic core - and F(0) - the membrane proton channel. F(1) has five subunits: alpha(3), beta(3), gamma(1), delta(1), epsilon(1). F(0) has three main subunits: a(1), b(2) and c(10-14). The alpha and beta chains form an alternating ring which encloses part of the gamma chain. F(1) is attached to F(0) by a central stalk formed by the gamma and epsilon chains, while a peripheral stalk is formed by the delta and b chains.

The protein localises to the cell inner membrane. In terms of biological role, f(1)F(0) ATP synthase produces ATP from ADP in the presence of a proton or sodium gradient. F-type ATPases consist of two structural domains, F(1) containing the extramembraneous catalytic core and F(0) containing the membrane proton channel, linked together by a central stalk and a peripheral stalk. During catalysis, ATP synthesis in the catalytic domain of F(1) is coupled via a rotary mechanism of the central stalk subunits to proton translocation. Component of the F(0) channel, it forms part of the peripheral stalk, linking F(1) to F(0). This chain is ATP synthase subunit b 2, found in Maricaulis maris (strain MCS10) (Caulobacter maris).